The sequence spans 117 residues: Large ribosomal subunit protein bL20 (117 aa).

Belongs to the bacterial ribosomal protein bL20 family.

In terms of biological role, binds directly to 23S ribosomal RNA and is necessary for the in vitro assembly process of the 50S ribosomal subunit. It is not involved in the protein synthesizing functions of that subunit. In Rickettsia africae (strain ESF-5), this protein is Large ribosomal subunit protein bL20.